Consider the following 199-residue polypeptide: Phosphatidylethanolamine N-methyltransferase (199 aa).

Topologically, residues 2–12 (SWLLGYVDPTE) are lumenal. Residues 13–33 (PSFVAAVLTIVFNPLFWNVVA) constitute an intramembrane region (helical). The Lumenal portion of the chain corresponds to 34-45 (RWEQRTRKLSRA). A helical transmembrane segment spans residues 46–66 (FGSPYLACYSLGSIILLLNIL). Residues 67 to 93 (RSHCFTQAMMSQPKMEGLDSHTIYFLG) are Cytoplasmic-facing. Residues 94–114 (LALLGWGLVFVLSSFYALGFT) form a helical membrane-spanning segment. Residue 98–100 (GWG) coordinates S-adenosyl-L-methionine. The Lumenal portion of the chain corresponds to 115 to 157 (GTFLGDYFGILKESRVTTFPFSVLDNPMYWGSTANYLGWALMH). A helical membrane pass occupies residues 158 to 178 (ASPTGLLLTVLVALVYVVALL). At 179–199 (FEEPFTAEIYRRKATRLHKRS) the chain is on the cytoplasmic side. S-adenosyl-L-methionine is bound at residue 180-181 (EE).

The protein belongs to the class VI-like SAM-binding methyltransferase superfamily. PEMT/PEM2 methyltransferase family. In terms of tissue distribution, expressed in liver (at protein level).

It is found in the endoplasmic reticulum membrane. It localises to the mitochondrion membrane. It catalyses the reaction a 1,2-diacyl-sn-glycero-3-phosphoethanolamine + S-adenosyl-L-methionine = a 1,2-diacyl-sn-glycero-3-phospho-N-methylethanolamine + S-adenosyl-L-homocysteine + H(+). The catalysed reaction is a 1,2-diacyl-sn-glycero-3-phospho-N-methylethanolamine + S-adenosyl-L-methionine = a 1,2-diacyl-sn-glycero-3-phospho-N,N-dimethylethanolamine + S-adenosyl-L-homocysteine + H(+). It carries out the reaction a 1,2-diacyl-sn-glycero-3-phospho-N,N-dimethylethanolamine + S-adenosyl-L-methionine = a 1,2-diacyl-sn-glycero-3-phosphocholine + S-adenosyl-L-homocysteine + H(+). The enzyme catalyses 1,2-di-(9Z-octadecenoyl)-sn-glycero-3-phosphoethanolamine + S-adenosyl-L-methionine = 1,2-di-(9Z-octadecenoyl)-sn-glycero-3-phospho-N-methylethanolamine + S-adenosyl-L-homocysteine + H(+). It catalyses the reaction 1,2-di-(9Z-octadecenoyl)-sn-glycero-3-phospho-N-methylethanolamine + S-adenosyl-L-methionine = 1,2-di-(9Z-octadecenoyl)-sn-glycero-3-phospho-N,N-dimethylethanolamine + S-adenosyl-L-homocysteine + H(+). The catalysed reaction is 1,2-di-(9Z-octadecenoyl)-sn-glycero-3-phospho-N,N-dimethylethanolamine + S-adenosyl-L-methionine = 1,2-di-(9Z-octadecenoyl)-sn-glycero-3-phosphocholine + S-adenosyl-L-homocysteine + H(+). It carries out the reaction 1,2-di-(9Z,12Z-octadecadienoyl)-sn-glycero-3-phosphoethanolamine + S-adenosyl-L-methionine = 1,2-di-(9Z,12Z-octadecadienoyl)-sn-glycero-3-phospho-N-methylethanolamine + S-adenosyl-L-homocysteine + H(+). The enzyme catalyses 1,2-di-(9Z,12Z-octadecadienoyl)-sn-glycero-3-phospho-N-methylethanolamine + S-adenosyl-L-methionine = 1,2-di-(9Z,12Z-octadecadienoyl)-sn-glycero-3-phospho-N,N-dimethylethanolamine + S-adenosyl-L-homocysteine + H(+). It catalyses the reaction 1,2-di-(9Z,12Z-octadecadienoyl)-sn-glycero-3-phospho-N,N-dimethylethanolamine + S-adenosyl-L-methionine = 1,2-di-(9Z,12Z-octadecadienoyl)-sn-glycero-3-phosphocholine + S-adenosyl-L-homocysteine + H(+). The catalysed reaction is 1,2-di-(9Z,12Z,15Z-octadecatrienoyl)-sn-glycero-3-phosphoethanolamine + S-adenosyl-L-methionine = 1,2-di-(9Z,12Z,15Z-octadecatrienoyl)-sn-glycero-3-phospho-N-methylethanolamine + S-adenosyl-L-homocysteine + H(+). It carries out the reaction 1,2-di-(9Z,12Z,15Z-octadecatrienoyl)-sn-glycero-3-phospho-N-methylethanolamine + S-adenosyl-L-methionine = 1,2-di-(9Z,12Z,15Z-octadecatrienoyl)-sn-glycero-3-phospho-N,N-dimethylethanolamine + S-adenosyl-L-homocysteine + H(+). The enzyme catalyses 1,2-di-(9Z,12Z,15Z-octadecatrienoyl)-sn-glycero-3-phospho-N,N-dimethylethanolamine + S-adenosyl-L-methionine = 1,2-di-(9Z,12Z,15Z-octadecatrienoyl)-sn-glycero-3-phosphocholine + S-adenosyl-L-homocysteine + H(+). It catalyses the reaction 1-hexadecanoyl-2-(4Z,7Z,10Z,13Z,16Z,19Z-docosahexaenoyl)-sn-glycero-3-phosphoethanolamine + S-adenosyl-L-methionine = 1-hexadecanoyl-2-(4Z,7Z,10Z,13Z,16Z,19Z-docosahexaenoyl)-sn-glycero-3-phospho-N-methylethanolamine + S-adenosyl-L-homocysteine + H(+). The catalysed reaction is 1-hexadecanoyl-2-(4Z,7Z,10Z,13Z,16Z,19Z-docosahexaenoyl)-sn-glycero-3-phospho-N-methylethanolamine + S-adenosyl-L-methionine = 1-hexadecanoyl-2-(4Z,7Z,10Z,13Z,16Z,19Z-docosahexaenoyl)-sn-glycero-3-phospho-N,N-dimethylethanolamine + S-adenosyl-L-homocysteine + H(+). It carries out the reaction 1-hexadecanoyl-2-(4Z,7Z,10Z,13Z,16Z,19Z-docosahexaenoyl)-sn-glycero-3-phospho-N,N-dimethylethanolamine + S-adenosyl-L-methionine = 1-hexadecanoyl-2-(4Z,7Z,10Z,13Z,16Z,19Z-docosahexaenoyl)-sn-glycero-3-phosphocholine + S-adenosyl-L-homocysteine + H(+). Its pathway is phospholipid metabolism; phosphatidylcholine biosynthesis. In terms of biological role, catalyzes the three sequential steps of the methylation pathway for the biosynthesis of phosphatidylcholine, a critical and essential component for membrane structure. Uses S-adenosylmethionine (S-adenosyl-L-methionine, SAM or AdoMet) as the methyl group donor for the methylation of phosphatidylethanolamine (1,2-diacyl-sn-glycero-3-phosphoethanolamine, PE) to phosphatidylmonomethylethanolamine (1,2-diacyl-sn-glycero-3-phospho-N-methylethanolamine, PMME), PMME to phosphatidyldimethylethanolamine (1,2-diacyl-sn-glycero-3-phospho-N,N-dimethylethanolamine, PDME), and PDME to phosphatidylcholine (1,2-diacyl-sn-glycero-3-phosphocholine, PC), producing S-adenosyl-L-homocysteine in each step. In Rattus norvegicus (Rat), this protein is Phosphatidylethanolamine N-methyltransferase.